The chain runs to 411 residues: Thyroxine-binding globulin (411 aa).

Residues 1–15 (MPLFSLVLLILGLHC) form the signal peptide. Residues Asn-34, Asn-97, Asn-163, and Asn-251 are each glycosylated (N-linked (GlcNAc...) asparagine). Positions 291 and 394 each coordinate thyroxine.

The protein belongs to the serpin family. Expressed by the liver and secreted in plasma.

Its subcellular location is the secreted. Functionally, major thyroid hormone transport protein in serum. This is Thyroxine-binding globulin (SERPINA7) from Bos taurus (Bovine).